The sequence spans 249 residues: Capsid protein (249 aa).

Residues 1 to 33 are disordered; sequence MDTDGDNDVFGSGNDTRNNDDKKKEEMKQNISD. The span at 17-28 shows a compositional bias: basic and acidic residues; sequence RNNDDKKKEEMK.

Belongs to the closteroviridae capsid protein family.

The protein resides in the virion. Capsid protein self-assembles to form filamentous capsids, about 650-850 nm in length. This Beta vulgaris (Sugar beet) protein is Capsid protein.